Reading from the N-terminus, the 328-residue chain is PLASTID TRANSCRIPTIONALLY ACTIVE protein 6, chloroplastic (328 aa).

The segment covering 1–14 (MASSAASPSLSLLS) has biased composition (low complexity). Residues 1–21 (MASSAASPSLSLLSFTSKPPY) are disordered. A chloroplast-targeting transit peptide spans 1–59 (MASSAASPSLSLLSFTSKPPYPSGSQRLFASFRTDGLFAPLTLKSRRGRGIVVKVDDVD). The short motif at 267 to 275 (RKRDRKDDL) is the Nuclear localization signal element. Positions 301 to 319 (EREEWTKTREDMEKHLRKL) match the RNA binding domain motif.

In terms of assembly, subunit of the plastid-encoded RNA polymerase (PEP) complex. Component of a large nuclear subcomplex that may include other PEP subunits (e.g. PTAC12/HMR/PAP5, PTAC14/PAP7 and PTAC7/PAP12). Binds directly to PTAC12/HMR/PAP5 in the nucleus. Interacts with MTERF5. In terms of tissue distribution, mostly expressed in rosette leaves, stems and flowers, and, to a lower extent, in roots and cauline leaves.

It is found in the plastid. The protein localises to the chloroplast. Its subcellular location is the chloroplast thylakoid. The protein resides in the nucleus. It localises to the nucleoplasm. In terms of biological role, essential protein involved in plastid gene expression and in chloroplast biogenesis. Links photomorphogenesis and chloroplast biogenesis through its dual localization; required for the formation of late photobodies in the nucleus, as well as for phytochrome B-mediated signaling cascade and subsequent reshaping of the plastid-encoded RNA polymerase (PEP) activity. Binds RNA via specific recognition motifs of viral origin. Recruited by MTERF5 to the transcriptionally paused region of psbEFLJ. Promotes leaf greening. The protein is PLASTID TRANSCRIPTIONALLY ACTIVE protein 6, chloroplastic of Arabidopsis thaliana (Mouse-ear cress).